A 365-amino-acid chain; its full sequence is MPLGKLDLVEEEYIAESGDHTPEASRLMGNGDSVVENLNGHTNGAVAKKKNEPRVPDMQLGKCRYVRLHDNVNYVAAAIILRNQGDDTEVLLIQEAKKSCRGKWYMPAGRVEAGETIEEAVVREVKEETGYSCDVVELLSLQVQGSGWYRYAFYCNITGGDLKTEPDQESLAAEWYNIKDLKANKVQLRGRDFIRLVDEAVTYRTHGPVDSIPRVMPLNQNVAGLFLEFMIVKHSRDGLRTEVLVHKSIKDETYLLEEEQPFPTVEFGFEYFFAMVVSKCYRHLLEEGANVVFTPSHVTRIKCHPKPMESLAHGVSIRVYCEHKQSASKAIIRSPRYHWISVESPETRQRFHMAQKQFRPSLHML.

A Nudix hydrolase domain is found at 72-201 (VNYVAAAIIL…DFIRLVDEAV (130 aa)). The short motif at 109-130 (GRVEAGETIEEAVVREVKEETG) is the Nudix box element. Mg(2+) contacts are provided by Glu-124 and Glu-128.

This sequence belongs to the Nudix hydrolase family. Mg(2+) is required as a cofactor. Requires Mn(2+) as cofactor.

Probably mediates the hydrolysis of some nucleoside diphosphate derivatives. The chain is Putative nudix hydrolase 1 (ndx-1) from Caenorhabditis elegans.